The sequence spans 87 residues: Acyl carrier protein 3 (87 aa).

The Carrier domain maps to 1–79; that stretch reads MSNPTVLDQI…DLVTYIEAAL (79 aa). S39 is subject to O-(pantetheine 4'-phosphoryl)serine.

The protein belongs to the acyl carrier protein (ACP) family. Post-translationally, 4'-phosphopantetheine is transferred from CoA to a specific serine of apo-ACP by AcpS. This modification is essential for activity because fatty acids are bound in thioester linkage to the sulfhydryl of the prosthetic group.

The protein resides in the cytoplasm. Its pathway is lipid metabolism; fatty acid biosynthesis. In terms of biological role, carrier of the growing fatty acid chain in fatty acid biosynthesis. The chain is Acyl carrier protein 3 from Ralstonia nicotianae (strain ATCC BAA-1114 / GMI1000) (Ralstonia solanacearum).